A 222-amino-acid polypeptide reads, in one-letter code: Octanoyltransferase (222 aa).

Residues 32–207 (RDRPDVLMLL…AFARVFGVQC (176 aa)) enclose the BPL/LPL catalytic domain. Substrate contacts are provided by residues 72 to 79 (RGGEVTYH), 139 to 141 (ALG), and 152 to 154 (GFA). Catalysis depends on cysteine 170, which acts as the Acyl-thioester intermediate.

It belongs to the LipB family.

It localises to the cytoplasm. It carries out the reaction octanoyl-[ACP] + L-lysyl-[protein] = N(6)-octanoyl-L-lysyl-[protein] + holo-[ACP] + H(+). It participates in protein modification; protein lipoylation via endogenous pathway; protein N(6)-(lipoyl)lysine from octanoyl-[acyl-carrier-protein]: step 1/2. Catalyzes the transfer of endogenously produced octanoic acid from octanoyl-acyl-carrier-protein onto the lipoyl domains of lipoate-dependent enzymes. Lipoyl-ACP can also act as a substrate although octanoyl-ACP is likely to be the physiological substrate. The chain is Octanoyltransferase from Gloeobacter violaceus (strain ATCC 29082 / PCC 7421).